Here is a 163-residue protein sequence, read N- to C-terminus: Lipoprotein signal peptidase (163 aa).

The next 4 helical transmembrane spans lie at 9-29 (AWPW…SKYL), 42-62 (ILPF…SFLG), 67-87 (WQII…ILWL), and 93-113 (SEIM…GNFI). Residues Asp123 and Asp141 contribute to the active site. Residues 137–157 (FNVADSAICVGVFLLIVYMLL) form a helical membrane-spanning segment.

Belongs to the peptidase A8 family.

It is found in the cell inner membrane. The enzyme catalyses Release of signal peptides from bacterial membrane prolipoproteins. Hydrolyzes -Xaa-Yaa-Zaa-|-(S,diacylglyceryl)Cys-, in which Xaa is hydrophobic (preferably Leu), and Yaa (Ala or Ser) and Zaa (Gly or Ala) have small, neutral side chains.. It functions in the pathway protein modification; lipoprotein biosynthesis (signal peptide cleavage). Its function is as follows. This protein specifically catalyzes the removal of signal peptides from prolipoproteins. This chain is Lipoprotein signal peptidase, found in Coxiella burnetii (strain Dugway 5J108-111).